Here is a 143-residue protein sequence, read N- to C-terminus: Transcriptional regulator MraZ (143 aa).

SpoVT-AbrB domains lie at 5–47 (TYTP…PKEE) and 76–119 (TDEQ…DKQA).

This sequence belongs to the MraZ family. As to quaternary structure, forms oligomers.

It is found in the cytoplasm. Its subcellular location is the nucleoid. This chain is Transcriptional regulator MraZ, found in Nocardia farcinica (strain IFM 10152).